A 290-amino-acid chain; its full sequence is Acetyl-coenzyme A carboxylase carboxyl transferase subunit beta (290 aa).

The CoA carboxyltransferase N-terminal domain occupies 27-290 (LWVKCPSCEA…LQRQPADALA (264 aa)). Residues Cys31, Cys34, Cys50, and Cys53 each coordinate Zn(2+). The C4-type zinc-finger motif lies at 31-53 (CPSCEAVLYRNDVDANLHVCPKC).

It belongs to the AccD/PCCB family. In terms of assembly, acetyl-CoA carboxylase is a heterohexamer composed of biotin carboxyl carrier protein (AccB), biotin carboxylase (AccC) and two subunits each of ACCase subunit alpha (AccA) and ACCase subunit beta (AccD). The cofactor is Zn(2+).

The protein resides in the cytoplasm. It carries out the reaction N(6)-carboxybiotinyl-L-lysyl-[protein] + acetyl-CoA = N(6)-biotinyl-L-lysyl-[protein] + malonyl-CoA. The protein operates within lipid metabolism; malonyl-CoA biosynthesis; malonyl-CoA from acetyl-CoA: step 1/1. Functionally, component of the acetyl coenzyme A carboxylase (ACC) complex. Biotin carboxylase (BC) catalyzes the carboxylation of biotin on its carrier protein (BCCP) and then the CO(2) group is transferred by the transcarboxylase to acetyl-CoA to form malonyl-CoA. The protein is Acetyl-coenzyme A carboxylase carboxyl transferase subunit beta of Burkholderia multivorans (strain ATCC 17616 / 249).